The primary structure comprises 621 residues: Growth factor receptor-bound protein 10 (621 aa).

Composition is skewed to polar residues over residues 1 to 23 (MNND…SDTD) and 33 to 59 (HASN…QRSQ). The interval 1–118 (MNNDINSSVE…PSQPPAKHCG (118 aa)) is disordered. A phosphoserine mark is found at Ser50 and Ser96. A compositionally biased stretch (pro residues) spans 95-112 (GSPPSVAPSSLPPPPSQP). The Ras-associating domain maps to 194–278 (LRKDVKVFSE…SKFLFRKNYA (85 aa)). Positions 318–427 (CPEIQGFLQV…WMTAFRLLKY (110 aa)) constitute a PH domain. A Phosphoserine; by MTOR and PKB/AKT1 modification is found at Ser455. 2 positions are modified to phosphoserine: Ser458 and Ser503. The region spanning 520–601 (WFHGRISREE…SDLIQLVDFY (82 aa)) is the SH2 domain.

Belongs to the GRB7/10/14 family. Interacts with ligand-activated tyrosine kinase receptors, including FGFR1, INSR, IGF1R, MET and PDGFRB in a phosphotyrosine-dependent manner through the SH2 domain. Poorly binds to the EGFR. Directly interacts with MAP3K14/NIK and is recruited to the EGFR-ERBB2 complex. Interacts with GIGYF1/PERQ1 and GIGYF2/TNRC15. When unphosphorylated, interacts with AKT1 and when phosphorylated with YWHAE/14-3-3 epsilon. Interacts with NEDD4. Interacts with LRP6, thus interfering with the binding of AXIN1 to LRP6. Binds to activated NRAS. Phosphorylated on serine residues upon EGF, FGF and PDGF stimulation. Widely expressed.

Its subcellular location is the cytoplasm. Its activity is regulated as follows. Phosphorylation by mTORC1 stabilizes and activates GRB10 constituting a feedback pathway by which mTORC1 inhibits INSR-dependent signaling. In terms of biological role, adapter protein which modulates coupling of a number of cell surface receptor kinases with specific signaling pathways. Binds to, and suppress signals from, activated receptors tyrosine kinases, including the insulin (INSR) and insulin-like growth factor (IGF1R) receptors. The inhibitory effect can be achieved by 2 mechanisms: interference with the signaling pathway and increased receptor degradation. Delays and reduces AKT1 phosphorylation in response to insulin stimulation. Blocks association between INSR and IRS1 and IRS2 and prevents insulin-stimulated IRS1 and IRS2 tyrosine phosphorylation. Recruits NEDD4 to IGF1R, leading to IGF1R ubiquitination, increased internalization and degradation by both the proteasomal and lysosomal pathways. A similar role in the mediation of ubiquitination also has been suggested with INSR. Negatively regulates Wnt signaling by interacting with LRP6 intracellular portion and interfering with the binding of AXIN1 to LRP6. Positive regulator of the KDR/VEGFR-2 signaling pathway. May inhibit NEDD4-mediated degradation of KDR/VEGFR-2. The polypeptide is Growth factor receptor-bound protein 10 (Grb10) (Mus musculus (Mouse)).